Consider the following 206-residue polypeptide: Large ribosomal subunit protein bL25 (206 aa).

The interval 184–206 (AEEAAAEVAEPEVIKKGKEEEEE) is disordered. Residues 195–206 (EVIKKGKEEEEE) are compositionally biased toward basic and acidic residues.

This sequence belongs to the bacterial ribosomal protein bL25 family. CTC subfamily. Part of the 50S ribosomal subunit; part of the 5S rRNA/L5/L18/L25 subcomplex. Contacts the 5S rRNA. Binds to the 5S rRNA independently of L5 and L18.

This is one of the proteins that binds to the 5S RNA in the ribosome where it forms part of the central protuberance. The sequence is that of Large ribosomal subunit protein bL25 from Thermus thermophilus (strain ATCC BAA-163 / DSM 7039 / HB27).